We begin with the raw amino-acid sequence, 373 residues long: MHPVLRQMRPQPRATTASAAVALSGSGEQEEPQCPTLELEEGEGIARLGAHSPERHPRVQLARDSRVAFVPRQNMFRDNSGEEAEEMRDCRFRAGRELRRGFNRERLLREEDFEPDEHSGISSARAHVSAANLVTAYEQTVTEERNFQKSFNNHVRTLIAREEVAIGLMHLWDFVEAYVHNPASKPLTAQLFLIVQHSRDNETFRDAMLNIAEPQGRWLLDLINILQSIVVQERSLSLADKVAAINYSMLSLGKFYARKIYKSPYVPIDKEVKIDSFYMRMALKVLTLSDDLGVYRNDRIHKAVSASRRRELSDKELMHSLQRALTGAGTEDESFFDMGADLRWQPSARALEAAGVASADVTGDDDDEDQYED.

The tract at residues 1–32 (MHPVLRQMRPQPRATTASAAVALSGSGEQEEP) is disordered. An interaction with packaging protein 1 region spans residues 1 to 150 (MHPVLRQMRP…VTEERNFQKS (150 aa)). Phosphoserine; by host is present on residues serine 52 and serine 334.

This sequence belongs to the adenoviridae packaging protein 3 family. As to quaternary structure, part of the genome packaging complex composed of packaging proteins 1, 2 and 3; this complex specifically binds to the packaging sequence on the left end of viral genomic DNA and performs packaging of the viral genome. Interacts with hexon-linking protein IIIa; this interaction is required to promote correct genome packaging. Cleaved at different sites by the viral protease during virion maturation.

Its subcellular location is the host nucleus. Involved in viral genome packaging through its interaction with packaging proteins 1 and 2. After proteolytic cleavage by adenovirus protease, L1 52/55k protein is removed from the capsid during viral maturation. The chain is Packaging protein 3 from Homo sapiens (Human).